A 410-amino-acid polypeptide reads, in one-letter code: Ribulose bisphosphate carboxylase large chain (410 aa).

Positions 100 and 150 each coordinate substrate. Lysine 152 serves as the catalytic Proton acceptor. Lysine 154 is a binding site for substrate. Residues lysine 178, aspartate 180, and glutamate 181 each contribute to the Mg(2+) site. An N6-carboxylysine modification is found at lysine 178. The active-site Proton acceptor is the histidine 271. The substrate site is built by arginine 272, histidine 304, and serine 356.

The protein belongs to the RuBisCO large chain family. Type I subfamily. In terms of assembly, heterohexadecamer of 8 large chains and 8 small chains; disulfide-linked. The disulfide link is formed within the large subunit homodimers. It depends on Mg(2+) as a cofactor. Post-translationally, the disulfide bond which can form in the large chain dimeric partners within the hexadecamer appears to be associated with oxidative stress and protein turnover.

It localises to the plastid. It is found in the chloroplast. It catalyses the reaction 2 (2R)-3-phosphoglycerate + 2 H(+) = D-ribulose 1,5-bisphosphate + CO2 + H2O. The catalysed reaction is D-ribulose 1,5-bisphosphate + O2 = 2-phosphoglycolate + (2R)-3-phosphoglycerate + 2 H(+). Functionally, ruBisCO catalyzes two reactions: the carboxylation of D-ribulose 1,5-bisphosphate, the primary event in carbon dioxide fixation, as well as the oxidative fragmentation of the pentose substrate in the photorespiration process. Both reactions occur simultaneously and in competition at the same active site. This chain is Ribulose bisphosphate carboxylase large chain (rbcL), found in Gleichenia japonica (Urajiro).